The primary structure comprises 546 residues: Glutamate--tRNA ligase (546 aa).

Residues 42-52 carry the 'HIGH' region motif; the sequence is PSPTGFIHLGN. A 'KMSKS' region motif is present at residues 293–297; that stretch reads KLSKR. Lys-296 is a binding site for ATP.

It belongs to the class-I aminoacyl-tRNA synthetase family. Glutamate--tRNA ligase type 1 subfamily. As to quaternary structure, monomer.

The protein localises to the cytoplasm. It catalyses the reaction tRNA(Glu) + L-glutamate + ATP = L-glutamyl-tRNA(Glu) + AMP + diphosphate. Its function is as follows. Catalyzes the attachment of glutamate to tRNA(Glu) in a two-step reaction: glutamate is first activated by ATP to form Glu-AMP and then transferred to the acceptor end of tRNA(Glu). This Acetivibrio thermocellus (strain ATCC 27405 / DSM 1237 / JCM 9322 / NBRC 103400 / NCIMB 10682 / NRRL B-4536 / VPI 7372) (Clostridium thermocellum) protein is Glutamate--tRNA ligase.